The chain runs to 431 residues: Enolase (431 aa).

Gln167 serves as a coordination point for (2R)-2-phosphoglycerate. Catalysis depends on Glu209, which acts as the Proton donor. Mg(2+) contacts are provided by Asp246, Glu289, and Asp316. 4 residues coordinate (2R)-2-phosphoglycerate: Lys341, Arg370, Ser371, and Lys392. Residue Lys341 is the Proton acceptor of the active site.

It belongs to the enolase family. As to quaternary structure, component of the RNA degradosome, a multiprotein complex involved in RNA processing and mRNA degradation. The cofactor is Mg(2+).

The protein resides in the cytoplasm. It is found in the secreted. The protein localises to the cell surface. It carries out the reaction (2R)-2-phosphoglycerate = phosphoenolpyruvate + H2O. It functions in the pathway carbohydrate degradation; glycolysis; pyruvate from D-glyceraldehyde 3-phosphate: step 4/5. Functionally, catalyzes the reversible conversion of 2-phosphoglycerate (2-PG) into phosphoenolpyruvate (PEP). It is essential for the degradation of carbohydrates via glycolysis. The protein is Enolase of Shewanella oneidensis (strain ATCC 700550 / JCM 31522 / CIP 106686 / LMG 19005 / NCIMB 14063 / MR-1).